The sequence spans 74 residues: Protein F9 homolog (74 aa).

Topologically, residues 1 to 34 are virion surface; sequence GHAAANCALARVATALTRRVPASRHGLAEGGTPP. A helical transmembrane segment spans residues 35–55; the sequence is WTLLLAVAAVAVLGVVAISLL. The Intravirion segment spans residues 56–73; that stretch reads RRALRIRFRYSKSIQTLR.

This sequence belongs to the chordopoxvirinae L1 protein family.

The protein resides in the virion membrane. The protein is Protein F9 homolog of Capra hircus (Goat).